The primary structure comprises 291 residues: Probable alpha-L-glutamate ligase (291 aa).

The ATP-grasp domain maps to 104 to 287 (HQLLASQGID…VAGTIIQHLE (184 aa)). ATP is bound by residues lysine 141, 178-179 (EF), aspartate 187, and 211-213 (RSN). The Mg(2+) site is built by aspartate 248, glutamate 260, and asparagine 262. Positions 248, 260, and 262 each coordinate Mn(2+).

This sequence belongs to the RimK family. Requires Mg(2+) as cofactor. It depends on Mn(2+) as a cofactor.

The polypeptide is Probable alpha-L-glutamate ligase (Xanthomonas campestris pv. campestris (strain 8004)).